The following is a 200-amino-acid chain: MARYTGPTWKISRRLGISLSGTGKELQKRPYPPGQHGPSQRRKLSEYGLQLQEKQKLRHMYGVNERQFRKTFEEAGKMPGKHGENFMILLESRLDNLVYRLGFARTRRQARQLVTHGHILVDGNRVNIPSYRVKPGQTISVREKSRNLQVIKEALELNNFVPDYLTLDAEKLEGTYTRLPERSELPSEINEALIVEFYSR.

The interval 22–43 is disordered; sequence TGKELQKRPYPPGQHGPSQRRK. Positions 92-152 constitute an S4 RNA-binding domain; that stretch reads SRLDNLVYRL…EKSRNLQVIK (61 aa).

It belongs to the universal ribosomal protein uS4 family. As to quaternary structure, part of the 30S ribosomal subunit. Contacts protein S5. The interaction surface between S4 and S5 is involved in control of translational fidelity.

Functionally, one of the primary rRNA binding proteins, it binds directly to 16S rRNA where it nucleates assembly of the body of the 30S subunit. In terms of biological role, with S5 and S12 plays an important role in translational accuracy. The protein is Small ribosomal subunit protein uS4 of Geobacillus sp. (strain WCH70).